Consider the following 431-residue polypeptide: Transposase for insertion sequence element IS232 (431 aa).

The 60-residue stretch at 20–79 (PNFKKLMGNLKMKINKSQLARELNVDRRTIDKYLNGFTPKGTKNKTSKIDTYYEVIAALL) folds into the HTH IS21-type domain. Residues 35–54 (KSQLARELNVDRRTIDKYLN) constitute a DNA-binding region (H-T-H motif). In terms of domain architecture, Integrase catalytic spans 140–315 (YETPPGEQAQ…IPVFALKQEK (176 aa)).

The protein belongs to the transposase IS21/IS408/IS1162 family.

Functionally, involved in the transposition of the insertion sequence. The chain is Transposase for insertion sequence element IS232 from Bacillus thuringiensis subsp. berliner.